The primary structure comprises 834 residues: Probable basic-leucine zipper transcription factor D (834 aa).

A disordered region spans residues 83-160 (NNNNMLNDHS…SNNNSSSEGE (78 aa)). Polar residues predominate over residues 90-111 (DHSSSPMRVPNSSPSLYNNSIE). A compositionally biased stretch (low complexity) spans 119–157 (DNSNNNNNNNNNINVNDINVNDINSNSTNNNESNNNSSS). Residues 211 to 246 (SEQQQQQQQQQQQQQQQQQQQQQQQQQHQHLLQEHQ) adopt a coiled-coil conformation. The segment at 378–405 (VVDPPTHNQEDERNVKKQRRLIKNRESA) is disordered. In terms of domain architecture, bZIP spans 391-454 (NVKKQRRLIK…KQLAAQNSNS (64 aa)). The basic motif stretch occupies residues 393–402 (KKQRRLIKNR). The leucine-zipper stretch occupies residues 407-414 (LSRMRKKI). Disordered stretches follow at residues 455–504 (NNNS…QQQS) and 550–712 (LSMS…KTPQ). The span at 550 to 595 (LSMSDSESSPQKSLRLSSNHHSLPDGTFNTIPIDQQTTATTNTKSL) shows a compositional bias: polar residues. Low complexity-rich tracts occupy residues 616 to 651 (NNNN…NNNN) and 694 to 707 (TTTT…TTST).

It belongs to the bZIP family.

It localises to the nucleus. Functionally, probable transcriptional regulator. This is Probable basic-leucine zipper transcription factor D (bzpD) from Dictyostelium discoideum (Social amoeba).